Reading from the N-terminus, the 896-residue chain is DNA mismatch repair protein MutS (896 aa).

Residue 607–614 (GPNMSGKS) participates in ATP binding. Residues 809 to 835 (ANSVAPNTAASMPVEAADESQPVESET) form a disordered region.

The protein belongs to the DNA mismatch repair MutS family.

Its function is as follows. This protein is involved in the repair of mismatches in DNA. It is possible that it carries out the mismatch recognition step. This protein has a weak ATPase activity. The sequence is that of DNA mismatch repair protein MutS from Lactiplantibacillus plantarum (strain ATCC BAA-793 / NCIMB 8826 / WCFS1) (Lactobacillus plantarum).